A 570-amino-acid polypeptide reads, in one-letter code: Urease subunit alpha 1 (570 aa).

The 440-residue stretch at 131-570 (GGIDTHVHFI…VPMAQRYFLF (440 aa)) folds into the Urease domain. Positions 136, 138, and 219 each coordinate Ni(2+). Position 219 is an N6-carboxylysine (lysine 219). A substrate-binding site is contributed by histidine 221. Ni(2+) is bound by residues histidine 248 and histidine 274. The active-site Proton donor is histidine 322. Aspartate 362 lines the Ni(2+) pocket.

The protein belongs to the metallo-dependent hydrolases superfamily. Urease alpha subunit family. In terms of assembly, heterotrimer of UreA (gamma), UreB (beta) and UreC (alpha) subunits. Three heterotrimers associate to form the active enzyme. The cofactor is Ni cation. Post-translationally, carboxylation allows a single lysine to coordinate two nickel ions.

Its subcellular location is the cytoplasm. It carries out the reaction urea + 2 H2O + H(+) = hydrogencarbonate + 2 NH4(+). It participates in nitrogen metabolism; urea degradation; CO(2) and NH(3) from urea (urease route): step 1/1. The polypeptide is Urease subunit alpha 1 (Brucella melitensis biotype 1 (strain ATCC 23456 / CCUG 17765 / NCTC 10094 / 16M)).